Here is a 1082-residue protein sequence, read N- to C-terminus: Inner tegument protein (1082 aa).

The interval 604–1082 (DHIECLFNVS…QQDLITPLKF (479 aa)) is interaction with large tegument protein.

Belongs to the herpesviridae inner tegument protein family. In terms of assembly, interacts (via C-terminus) with the large tegument protein/LTP (via N-terminus).

The protein localises to the virion tegument. It is found in the host cytoplasm. The protein resides in the host nucleus. It localises to the host Golgi apparatus. Its subcellular location is the host trans-Golgi network. Functionally, plays an essential role in cytoplasmic secondary envelopment during viral egress. Interacts with the capsid via the large tegument protein/LTP and participates in its transport to the host trans-Golgi network (TGN) where secondary envelopment occurs. Modulates tegumentation and capsid accumulation at the viral assembly complex. The protein is Inner tegument protein (U30) of Homo sapiens (Human).